Consider the following 106-residue polypeptide: ATP-dependent Clp protease adapter protein ClpS (106 aa).

Belongs to the ClpS family. Binds to the N-terminal domain of the chaperone ClpA.

Involved in the modulation of the specificity of the ClpAP-mediated ATP-dependent protein degradation. This is ATP-dependent Clp protease adapter protein ClpS from Pseudoalteromonas atlantica (strain T6c / ATCC BAA-1087).